We begin with the raw amino-acid sequence, 310 residues long: Cytosolic Fe-S cluster assembly factor Nubp1 homolog (310 aa).

Positions 8, 22, 25, and 31 each coordinate [4Fe-4S] cluster. Position 62-69 (62-69 (GKGGVGKS)) interacts with ATP. Residues Cys-239 and Cys-242 each contribute to the [4Fe-4S] cluster site.

This sequence belongs to the Mrp/NBP35 ATP-binding proteins family. NUBP1/NBP35 subfamily. As to quaternary structure, heterotetramer of 2 Nubp1 and 2 Nubp2 chains. Requires [4Fe-4S] cluster as cofactor.

The protein resides in the cytoplasm. Functionally, component of the cytosolic iron-sulfur (Fe/S) protein assembly (CIA) machinery. Required for maturation of extramitochondrial Fe-S proteins. The Nubp1-Nubp2 heterotetramer forms a Fe-S scaffold complex, mediating the de novo assembly of an Fe-S cluster and its transfer to target apoproteins. The protein is Cytosolic Fe-S cluster assembly factor Nubp1 homolog of Drosophila willistoni (Fruit fly).